A 130-amino-acid polypeptide reads, in one-letter code: Small ribosomal subunit protein uS8 (130 aa).

This sequence belongs to the universal ribosomal protein uS8 family. In terms of assembly, component of the small ribosomal subunit (SSU). Mature N.crassa ribosomes consist of a small (40S) and a large (60S) subunit. The 40S small subunit contains 1 molecule of ribosomal RNA (18S rRNA) and at least 32 different proteins. The large 60S subunit contains 3 rRNA molecules (26S, 5.8S and 5S rRNA) and at least 42 different proteins.

Its subcellular location is the cytoplasm. Component of the ribosome, a large ribonucleoprotein complex responsible for the synthesis of proteins in the cell. The small ribosomal subunit (SSU) binds messenger RNAs (mRNAs) and translates the encoded message by selecting cognate aminoacyl-transfer RNA (tRNA) molecules. The large subunit (LSU) contains the ribosomal catalytic site termed the peptidyl transferase center (PTC), which catalyzes the formation of peptide bonds, thereby polymerizing the amino acids delivered by tRNAs into a polypeptide chain. The nascent polypeptides leave the ribosome through a tunnel in the LSU and interact with protein factors that function in enzymatic processing, targeting, and the membrane insertion of nascent chains at the exit of the ribosomal tunnel. The sequence is that of Small ribosomal subunit protein uS8 (crp-27) from Neurospora crassa (strain ATCC 24698 / 74-OR23-1A / CBS 708.71 / DSM 1257 / FGSC 987).